A 392-amino-acid chain; its full sequence is Chaperone protein DnaJ 2 (392 aa).

The J domain maps to 10–75 (DFYKELGVSS…AKRKEYDETR (66 aa)). The CR-type zinc-finger motif lies at 161–239 (GVAMPLRLTS…CKGTGVTTRT (79 aa)). Zn(2+)-binding residues include Cys174, Cys177, Cys191, Cys194, Cys213, Cys216, Cys227, and Cys230. CXXCXGXG motif repeat units lie at residues 174–181 (CTNCHGSG), 191–198 (CPTCNGSG), 213–220 (CTDCRGSG), and 227–234 (CDECKGTG).

The protein belongs to the DnaJ family. Homodimer. It depends on Zn(2+) as a cofactor.

The protein resides in the cytoplasm. Functionally, participates actively in the response to hyperosmotic and heat shock by preventing the aggregation of stress-denatured proteins and by disaggregating proteins, also in an autonomous, DnaK-independent fashion. Unfolded proteins bind initially to DnaJ; upon interaction with the DnaJ-bound protein, DnaK hydrolyzes its bound ATP, resulting in the formation of a stable complex. GrpE releases ADP from DnaK; ATP binding to DnaK triggers the release of the substrate protein, thus completing the reaction cycle. Several rounds of ATP-dependent interactions between DnaJ, DnaK and GrpE are required for fully efficient folding. Also involved, together with DnaK and GrpE, in the DNA replication of plasmids through activation of initiation proteins. The chain is Chaperone protein DnaJ 2 from Mycolicibacterium paratuberculosis (strain ATCC BAA-968 / K-10) (Mycobacterium paratuberculosis).